The sequence spans 383 residues: V-type proton ATPase subunit C 1-A (383 aa).

Threonine 2 carries the N-acetylthreonine modification.

This sequence belongs to the V-ATPase C subunit family. V-ATPase is a heteromultimeric enzyme made up of two complexes: the ATP-hydrolytic V1 complex and the proton translocation V0 complex. The V1 complex consists of three catalytic AB heterodimers that form a heterohexamer, three peripheral stalks each consisting of EG heterodimers, one central rotor including subunits D and F, and the regulatory subunits C and H. The proton translocation complex V0 consists of the proton transport subunit a, a ring of proteolipid subunits c9c'', rotary subunit d, subunits e and f, and two accessory subunits.

Subunit of the V1 complex of vacuolar(H+)-ATPase (V-ATPase), a multisubunit enzyme composed of a peripheral complex (V1) that hydrolyzes ATP and a membrane integral complex (V0) that translocates protons. V-ATPase is responsible for acidifying and maintaining the pH of intracellular compartments and in some cell types, is targeted to the plasma membrane, where it is responsible for acidifying the extracellular environment. Subunit C is necessary for the assembly of the catalytic sector of the enzyme and is likely to have a specific function in its catalytic activity. The polypeptide is V-type proton ATPase subunit C 1-A (atp6v1c1a) (Danio rerio (Zebrafish)).